Reading from the N-terminus, the 493-residue chain is Cytoplasmic tRNA 2-thiolation protein 2 (493 aa).

Serine 489 carries the phosphoserine modification.

The protein belongs to the CTU2/NCS2 family. As to quaternary structure, interacts with NCS6 and URM1. May act by forming a heterodimer with NCS6.

Its subcellular location is the cytoplasm. It participates in tRNA modification; 5-methoxycarbonylmethyl-2-thiouridine-tRNA biosynthesis. Functionally, plays a central role in 2-thiolation of mcm(5)S(2)U at tRNA wobble positions of tRNA(Lys), tRNA(Glu) and tRNA(Gln). May act by forming a heterodimer with NCS6 that ligates sulfur from thiocarboxylated URM1 onto the uridine of tRNAs at wobble position. Prior mcm(5) tRNA modification by the elongator complex is required for 2-thiolation. May also be involved in protein urmylation. The protein is Cytoplasmic tRNA 2-thiolation protein 2 of Saccharomyces cerevisiae (strain RM11-1a) (Baker's yeast).